The primary structure comprises 548 residues: MQRSIFARFGNSSAAVSTLNRLSTTAAPHAKNGYATATGAGAAAATATASSTHAAAAAAAAANHSTQESGFDYEGLIDSELQKKRLDKSYRYFNNINRLAKEFPLAHRQREADKVTVWCSNDYLALSKHPEVLDAMHKTIDKYGCGAGGTRNIAGHNIPTLNLEAELATLHKKEGALVFSSCYVANDAVLSLLGQKMKDLVIFSDELNHASMIVGIKHANVKKHIFKHNDLNELEQLLQSYPKSVPKLIAFESVYSMAGSVADIEKICDLADKYGALTFLDEVHAVGLYGPHGAGVAEHCDFESHRASGIATPKTNDKGGAKTVMDRVDMITGTLGKSFGSVGGYVAASRKLIDWFRSFAPGFIFTTTLPPSVMAGATAAIRYQRCHIDLRTSQQKHTMYVKKAFHELGIPVIPNPSHIVPVLIGNADLAKQASDILINKHQIYVQAINFPTVARGTERLRITPTPGHTNDLSDILINAVDDVFNELQLPRVRDWESQGGLLGVGESGFVEESNLWTSSQLSLTNDDLNPNVRDPIVKQLEVSSGIKQ.

Residues 1 to 22 (MQRSIFARFGNSSAAVSTLNRL) constitute a mitochondrion transit peptide. Residues arginine 91, serine 204, and lysine 223 each contribute to the substrate site. Pyridoxal 5'-phosphate-binding residues include serine 256, histidine 284, and threonine 334. The active site involves lysine 337. Lysine 337 is modified (N6-(pyridoxal phosphate)lysine). 2 residues coordinate pyridoxal 5'-phosphate: threonine 366 and threonine 367. Residue threonine 452 coordinates substrate.

It belongs to the class-II pyridoxal-phosphate-dependent aminotransferase family. Homodimer. Interacts with MCX1. Pyridoxal 5'-phosphate serves as cofactor.

Its subcellular location is the mitochondrion matrix. The catalysed reaction is succinyl-CoA + glycine + H(+) = 5-aminolevulinate + CO2 + CoA. The protein operates within porphyrin-containing compound metabolism; protoporphyrin-IX biosynthesis; 5-aminolevulinate from glycine: step 1/1. Ihnhibited by hemin. Its function is as follows. Catalyzes the synthesis of 5-aminolevulinate (ALA) from succinyl-CoA and glycine, the first and rate-limiting step in heme biosynthesis. The protein is 5-aminolevulinate synthase, mitochondrial of Saccharomyces cerevisiae (strain ATCC 204508 / S288c) (Baker's yeast).